Reading from the N-terminus, the 127-residue chain is MSDTNKYRIEVQPMPQFIPEQSDPENDRYIFAYTITIKNIGEVPAQLVSRHWIITDGNNEVQEVRGLGVVGKQPLLQPGESFQYTSGSSLTTAIGTMKGTYQMVAEDGTHFEAEIPEFVLASPRALH.

The 125-residue stretch at 3–127 (DTNKYRIEVQ…FVLASPRALH (125 aa)) folds into the ApaG domain.

This chain is Protein ApaG, found in Dechloromonas aromatica (strain RCB).